A 62-amino-acid chain; its full sequence is Photosystem II reaction center protein Z (62 aa).

Transmembrane regions (helical) follow at residues 8–28 (AVFA…VVFA) and 41–61 (FSGT…NSLI).

This sequence belongs to the PsbZ family. PSII is composed of 1 copy each of membrane proteins PsbA, PsbB, PsbC, PsbD, PsbE, PsbF, PsbH, PsbI, PsbJ, PsbK, PsbL, PsbM, PsbT, PsbY, PsbZ, Psb30/Ycf12, at least 3 peripheral proteins of the oxygen-evolving complex and a large number of cofactors. It forms dimeric complexes.

Its subcellular location is the plastid. It localises to the chloroplast thylakoid membrane. Functionally, may control the interaction of photosystem II (PSII) cores with the light-harvesting antenna, regulates electron flow through the 2 photosystem reaction centers. PSII is a light-driven water plastoquinone oxidoreductase, using light energy to abstract electrons from H(2)O, generating a proton gradient subsequently used for ATP formation. The chain is Photosystem II reaction center protein Z from Coffea arabica (Arabian coffee).